Here is a 330-residue protein sequence, read N- to C-terminus: ADP-L-glycero-D-manno-heptose-6-epimerase (330 aa).

Residues 11 to 12 (FI), 32 to 33 (DN), K39, K54, 75 to 79 (EGACS), and N92 each bind NADP(+). Y139 (proton acceptor) is an active-site residue. An NADP(+)-binding site is contributed by K143. N168 contributes to the substrate binding site. NADP(+) is bound by residues V169 and K177. K177 functions as the Proton acceptor in the catalytic mechanism. Substrate is bound by residues R179, H186, 200-203 (FGEY), R213, and Y292.

It belongs to the NAD(P)-dependent epimerase/dehydratase family. HldD subfamily. Homopentamer. It depends on NADP(+) as a cofactor.

The enzyme catalyses ADP-D-glycero-beta-D-manno-heptose = ADP-L-glycero-beta-D-manno-heptose. It participates in nucleotide-sugar biosynthesis; ADP-L-glycero-beta-D-manno-heptose biosynthesis; ADP-L-glycero-beta-D-manno-heptose from D-glycero-beta-D-manno-heptose 7-phosphate: step 4/4. Functionally, catalyzes the interconversion between ADP-D-glycero-beta-D-manno-heptose and ADP-L-glycero-beta-D-manno-heptose via an epimerization at carbon 6 of the heptose. The polypeptide is ADP-L-glycero-D-manno-heptose-6-epimerase (Paraburkholderia phytofirmans (strain DSM 17436 / LMG 22146 / PsJN) (Burkholderia phytofirmans)).